A 194-amino-acid polypeptide reads, in one-letter code: UPF0215 protein DR_A0167 (194 aa).

Belongs to the UPF0215 family.

This is UPF0215 protein DR_A0167 from Deinococcus radiodurans (strain ATCC 13939 / DSM 20539 / JCM 16871 / CCUG 27074 / LMG 4051 / NBRC 15346 / NCIMB 9279 / VKM B-1422 / R1).